The sequence spans 212 residues: Imidazole glycerol phosphate synthase subunit HisH (212 aa).

The Glutamine amidotransferase type-1 domain occupies 3-212; the sequence is TVAVIDYGMG…QNFAAWDGRW (210 aa). C81 acts as the Nucleophile in catalysis. Catalysis depends on residues H190 and E192.

As to quaternary structure, heterodimer of HisH and HisF.

Its subcellular location is the cytoplasm. It carries out the reaction 5-[(5-phospho-1-deoxy-D-ribulos-1-ylimino)methylamino]-1-(5-phospho-beta-D-ribosyl)imidazole-4-carboxamide + L-glutamine = D-erythro-1-(imidazol-4-yl)glycerol 3-phosphate + 5-amino-1-(5-phospho-beta-D-ribosyl)imidazole-4-carboxamide + L-glutamate + H(+). The catalysed reaction is L-glutamine + H2O = L-glutamate + NH4(+). It participates in amino-acid biosynthesis; L-histidine biosynthesis; L-histidine from 5-phospho-alpha-D-ribose 1-diphosphate: step 5/9. IGPS catalyzes the conversion of PRFAR and glutamine to IGP, AICAR and glutamate. The HisH subunit catalyzes the hydrolysis of glutamine to glutamate and ammonia as part of the synthesis of IGP and AICAR. The resulting ammonia molecule is channeled to the active site of HisF. In Pseudomonas savastanoi pv. phaseolicola (strain 1448A / Race 6) (Pseudomonas syringae pv. phaseolicola (strain 1448A / Race 6)), this protein is Imidazole glycerol phosphate synthase subunit HisH.